The sequence spans 181 residues: Ribulose bisphosphate carboxylase small subunit, chloroplastic 2 (181 aa).

The N-terminal 57 residues, 1–57 (MAFLIMSSAAAVATGTNAAQASMIAPFTGLKSATSFPVSRKQNLDITSIASNGGRVQ), are a transit peptide targeting the chloroplast.

This sequence belongs to the RuBisCO small chain family. Heterohexadecamer of 8 large and 8 small subunits.

It localises to the plastid. The protein resides in the chloroplast. Functionally, ruBisCO catalyzes two reactions: the carboxylation of D-ribulose 1,5-bisphosphate, the primary event in carbon dioxide fixation, as well as the oxidative fragmentation of the pentose substrate. Both reactions occur simultaneously and in competition at the same active site. Although the small subunit is not catalytic it is essential for maximal activity. The chain is Ribulose bisphosphate carboxylase small subunit, chloroplastic 2 from Nicotiana sylvestris (Wood tobacco).